Reading from the N-terminus, the 80-residue chain is Ubiquinol-cytochrome c reductase complex assembly factor 5 (80 aa).

At 1 to 19 the chain is on the mitochondrial matrix side; it reads MFSRAQVRRALQRVPGKQR. A helical transmembrane segment spans residues 20-41; that stretch reads FGIYRFLPFFFVLGGAMEWIMI. At 42-80 the chain is on the mitochondrial intermembrane side; it reads KVRVGQETFYDVYRRKASERQYQRRLEDTSETNLHKLIK.

It belongs to the UQCC5 family. As to quaternary structure, associates with the mitochondrial ribosome. Interacts with UQCC6. Interacts with MT-CYB; interacts with newly synthesizes MT-CYB. Forms a complex, named COMB/coordinator of mitochondrial CYTB biogenesis, composed of UQCC1, UQCC2, UQCC4, UQCC5 and UQCC6; stabilizes nascent cytochrome b/MT-CYB and promotes its membrane insertion.

It is found in the mitochondrion inner membrane. In terms of biological role, required for the assembly and stability of the mitochondrial ubiquinol-cytochrome c reductase complex (complex III (CIII) or cytochrome b-c1 complex), a multisubunit transmembrane complex that is part of the mitochondrial electron transport chain (ETC) which drives oxidative phosphorylation. Mediates early complex III biogenesis. Participates in regulating the levels of electron transport chain proteins, and therefore energy supply, in response to changes in energy demand. Also required for cytochrome c oxidase complex (complex IV) assembly. The chain is Ubiquinol-cytochrome c reductase complex assembly factor 5 from Mus musculus (Mouse).